Reading from the N-terminus, the 145-residue chain is uncharacterized protein (145 aa).

Its subcellular location is the mitochondrion. This is an uncharacterized protein from Arabidopsis thaliana (Mouse-ear cress).